Consider the following 117-residue polypeptide: Aspartate 1-decarboxylase (117 aa).

Ser25 functions as the Schiff-base intermediate with substrate; via pyruvic acid in the catalytic mechanism. Residue Ser25 is modified to Pyruvic acid (Ser). Residue Thr57 participates in substrate binding. Tyr58 (proton donor) is an active-site residue. Residue 73–75 (GAA) participates in substrate binding.

This sequence belongs to the PanD family. As to quaternary structure, heterooctamer of four alpha and four beta subunits. The cofactor is pyruvate. In terms of processing, is synthesized initially as an inactive proenzyme, which is activated by self-cleavage at a specific serine bond to produce a beta-subunit with a hydroxyl group at its C-terminus and an alpha-subunit with a pyruvoyl group at its N-terminus.

Its subcellular location is the cytoplasm. The enzyme catalyses L-aspartate + H(+) = beta-alanine + CO2. It participates in cofactor biosynthesis; (R)-pantothenate biosynthesis; beta-alanine from L-aspartate: step 1/1. Its function is as follows. Catalyzes the pyruvoyl-dependent decarboxylation of aspartate to produce beta-alanine. This is Aspartate 1-decarboxylase from Bacteroides fragilis (strain ATCC 25285 / DSM 2151 / CCUG 4856 / JCM 11019 / LMG 10263 / NCTC 9343 / Onslow / VPI 2553 / EN-2).